The following is a 184-amino-acid chain: Transposon Tn917 resolvase (184 aa).

The Resolvase/invertase-type recombinase catalytic domain maps to Met-1–Gly-134. The active-site O-(5'-phospho-DNA)-serine intermediate is Ser-9. Residues Ile-161 to Asn-180 constitute a DNA-binding region (H-T-H motif).

This sequence belongs to the site-specific recombinase resolvase family.

Functionally, resolvase catalyzes the resolution (a site-specific recombination) of the cointegrated replicon to yield the final transposition products. The protein is Transposon Tn917 resolvase (tnpR) of Enterococcus faecalis (Streptococcus faecalis).